The following is a 239-amino-acid chain: Purine nucleoside phosphorylase DeoD-type (239 aa).

His5 lines the a purine D-ribonucleoside pocket. Phosphate contacts are provided by residues Gly21, Arg25, Arg44, and 88 to 91; that span reads RVGS. A purine D-ribonucleoside contacts are provided by residues 180–182 and 204–205; these read EME and SD. Asp205 serves as the catalytic Proton donor.

The protein belongs to the PNP/UDP phosphorylase family. In terms of assembly, homohexamer; trimer of homodimers.

The enzyme catalyses a purine D-ribonucleoside + phosphate = a purine nucleobase + alpha-D-ribose 1-phosphate. It carries out the reaction a purine 2'-deoxy-D-ribonucleoside + phosphate = a purine nucleobase + 2-deoxy-alpha-D-ribose 1-phosphate. Its function is as follows. Catalyzes the reversible phosphorolytic breakdown of the N-glycosidic bond in the beta-(deoxy)ribonucleoside molecules, with the formation of the corresponding free purine bases and pentose-1-phosphate. The sequence is that of Purine nucleoside phosphorylase DeoD-type from Klebsiella pneumoniae (strain 342).